The chain runs to 198 residues: CXXC-type zinc finger protein 4 (198 aa).

The disordered stretch occupies residues 114 to 134; it reads NHSSSSSSSSGGAGGANPAKK. The CXXC-type zinc-finger motif lies at 132 to 173; it reads AKKKRKRCGVCVPCKRLINCGVCSSCRNRKTGHQICKFRKCE. 6 residues coordinate Zn(2+): cysteine 139, cysteine 142, cysteine 145, cysteine 151, cysteine 154, and cysteine 157. The tract at residues 161–166 is interaction with DVL1; it reads KTGHQI. Zn(2+)-binding residues include cysteine 167 and cysteine 172.

Interacts with the PDZ domain of DVL1.

Its subcellular location is the cytoplasm. Its function is as follows. Acts as a negative regulator of the Wnt signaling pathway via its interaction with DVL1. Binds preferentially to DNA containing cytidine-phosphate-guanosine (CpG) dinucleotides over CpH (H=A, T, and C), hemimethylated-CpG and hemimethylated-hydroxymethyl-CpG. The polypeptide is CXXC-type zinc finger protein 4 (CXXC4) (Homo sapiens (Human)).